Here is a 360-residue protein sequence, read N- to C-terminus: Peptide chain release factor 1 (360 aa).

Gln-235 is subject to N5-methylglutamine.

It belongs to the prokaryotic/mitochondrial release factor family. In terms of processing, methylated by PrmC. Methylation increases the termination efficiency of RF1.

It is found in the cytoplasm. Functionally, peptide chain release factor 1 directs the termination of translation in response to the peptide chain termination codons UAG and UAA. The polypeptide is Peptide chain release factor 1 (Cupriavidus taiwanensis (strain DSM 17343 / BCRC 17206 / CCUG 44338 / CIP 107171 / LMG 19424 / R1) (Ralstonia taiwanensis (strain LMG 19424))).